The following is a 371-amino-acid chain: Transaldolase (371 aa).

Lys-140 serves as the catalytic Schiff-base intermediate with substrate.

Belongs to the transaldolase family. Type 2 subfamily.

The protein resides in the cytoplasm. The catalysed reaction is D-sedoheptulose 7-phosphate + D-glyceraldehyde 3-phosphate = D-erythrose 4-phosphate + beta-D-fructose 6-phosphate. The protein operates within carbohydrate degradation; pentose phosphate pathway; D-glyceraldehyde 3-phosphate and beta-D-fructose 6-phosphate from D-ribose 5-phosphate and D-xylulose 5-phosphate (non-oxidative stage): step 2/3. In terms of biological role, transaldolase is important for the balance of metabolites in the pentose-phosphate pathway. This chain is Transaldolase, found in Frankia alni (strain DSM 45986 / CECT 9034 / ACN14a).